Reading from the N-terminus, the 430-residue chain is Synaptotagmin-11 (430 aa).

The Vesicular segment spans residues 1–15 (MAEITNIRPSFDVSP). Residues 16-36 (VAAGLIGASVLVVCVSVTVFV) traverse the membrane as a helical segment. Over 37-430 (WTCCHQQAEK…VAKWHSLSEY (394 aa)) the chain is Cytoplasmic. The segment at 132-154 (RSPMTSLTPGESKPTSPSSPEED) is disordered. Ser133 bears the Phosphoserine mark. Positions 140-150 (PGESKPTSPSS) are enriched in low complexity. C2 domains are found at residues 156-278 (MLGS…QLTR) and 290-425 (SRGE…AKWH). Ca(2+) is bound by residues Asp249, Ser252, and Asp255.

The protein belongs to the synaptotagmin family. Homodimer. Can also form heterodimers. Interacts with PRKN. Interacts (via C2 2 domain) with AGO2 and SND1; the interaction with SND1 is direct. Interacts with KIF1A; the interaction increases in presence of calcium. Requires Ca(2+) as cofactor. Ubiquitinated, at least by PRKN, and targeted to the proteasome complex for degradation. Ubiquitination is inhibited by ATP13A2. As to expression, highly expressed in brain and at lower levels in other tissues.

Its subcellular location is the cytoplasmic vesicle membrane. It localises to the perikaryon. The protein resides in the golgi apparatus. It is found in the trans-Golgi network membrane. The protein localises to the recycling endosome membrane. Its subcellular location is the lysosome membrane. It localises to the cytoplasmic vesicle. The protein resides in the phagosome. It is found in the cell projection. The protein localises to the axon. Its subcellular location is the dendrite. It localises to the postsynaptic density. The protein resides in the clathrin-coated vesicle membrane. Synaptotagmin family member involved in vesicular and membrane trafficking which does not bind Ca(2+). Inhibits clathrin-mediated and bulk endocytosis in neurons, functions to ensure precision in vesicle retrieval. Plays an important role in dopamine transmission by regulating endocytosis and the vesicle-recycling process. Essential component of a neuronal vesicular trafficking pathway that differs from the synaptic vesicle trafficking pathway but is crucial for development and synaptic plasticity. In macrophages and microglia, inhibits the conventional cytokine secretion, of at least IL6 and TNF, and phagocytosis. In astrocytes, regulates lysosome exocytosis, mechanism required for the repair of injured astrocyte cell membrane. Required for the ATP13A2-mediated regulation of the autophagy-lysosome pathway. The protein is Synaptotagmin-11 of Rattus norvegicus (Rat).